Here is a 170-residue protein sequence, read N- to C-terminus: MNDYTLAIRRERRLLMLLGWVCIALLAGALYLQYVKNEDPCPLCIIQRYFFCAIGIFAFLAAGIRNWRGVWVLELLIAIAAAGGVGTAARHLTIQMNPGFSCGFDTLQPIVDSLPPAQWFPGMFKVAGLCETVYPPIFGILLPGWSLIGFAVILIAVVASLWRHRRKLVG.

Residues 1-14 (MNDYTLAIRRERRL) lie on the Cytoplasmic side of the membrane. A helical transmembrane segment spans residues 15–31 (LMLLGWVCIALLAGALY). At 32–49 (LQYVKNEDPCPLCIIQRY) the chain is on the periplasmic side. An intrachain disulfide couples C41 to C44. A helical membrane pass occupies residues 50 to 64 (FFCAIGIFAFLAAGI). Residues 65 to 71 (RNWRGVW) lie on the Cytoplasmic side of the membrane. A helical membrane pass occupies residues 72 to 89 (VLELLIAIAAAGGVGTAA). The Periplasmic portion of the chain corresponds to 90–144 (RHLTIQMNPGFSCGFDTLQPIVDSLPPAQWFPGMFKVAGLCETVYPPIFGILLPG). A disulfide bridge connects residues C102 and C130. Residues 145–163 (WSLIGFAVILIAVVASLWR) traverse the membrane as a helical segment. Residues 164–170 (HRRKLVG) are Cytoplasmic-facing.

This sequence belongs to the DsbB family.

Its subcellular location is the cell inner membrane. In terms of biological role, required for disulfide bond formation in some periplasmic proteins. Acts by oxidizing the DsbA protein. This Burkholderia lata (strain ATCC 17760 / DSM 23089 / LMG 22485 / NCIMB 9086 / R18194 / 383) protein is Disulfide bond formation protein B 1.